Here is a 427-residue protein sequence, read N- to C-terminus: MDDLNYATLTDALEQTVFENFDDGLYIGMMSGTSLDGMDAVLCQFSEKDNTQQPMHVLATHSQDFPPRLREVLLALCQPNGIQALTPSDDEPNSELDWFGWASKEYAEFSSDVVNTLLQQSNTDSESVLAIGCHGQTVRHRPQMGFSLQLVDANIIAERTGISVVSDFRRRDMAVGGQGAPLVPAFHQALFAVPDSTRVLLNLGGIANIAVLPAISNDLVDSNEHSENQPSDSVVGYDTGPANLLLDAWTTLHTDKDYDAGGTWAQSGQVVEPLLNQLLEHPFFKKTYPKSTGREDFNLAWLQDELQKFDQASADVRYSSADVQATLTELTAISASAQINLFINASSSNAVYVCGGGALNNYLMTRLQVHLQRCKVETTASLGLEPTWVEAVAFAWLARQTLMGETGNLPAVTGASKGVVLGQVCFA.

Position 32–39 (32–39 (GTSLDGMD)) interacts with ATP.

It belongs to the anhydro-N-acetylmuramic acid kinase family.

The enzyme catalyses 1,6-anhydro-N-acetyl-beta-muramate + ATP + H2O = N-acetyl-D-muramate 6-phosphate + ADP + H(+). The protein operates within amino-sugar metabolism; 1,6-anhydro-N-acetylmuramate degradation. It functions in the pathway cell wall biogenesis; peptidoglycan recycling. In terms of biological role, catalyzes the specific phosphorylation of 1,6-anhydro-N-acetylmuramic acid (anhMurNAc) with the simultaneous cleavage of the 1,6-anhydro ring, generating MurNAc-6-P. Is required for the utilization of anhMurNAc either imported from the medium or derived from its own cell wall murein, and thus plays a role in cell wall recycling. This chain is Anhydro-N-acetylmuramic acid kinase, found in Psychrobacter cryohalolentis (strain ATCC BAA-1226 / DSM 17306 / VKM B-2378 / K5).